A 45-amino-acid polypeptide reads, in one-letter code: Photosystem II reaction center protein K (45 aa).

The propeptide occupies 1 to 8 (METALLLA). Residues 24–44 (LPLIPLFFLLLAFVWQASVGF) traverse the membrane as a helical segment.

It belongs to the PsbK family. In terms of assembly, PSII is composed of 1 copy each of membrane proteins PsbA, PsbB, PsbC, PsbD, PsbE, PsbF, PsbH, PsbI, PsbJ, PsbK, PsbL, PsbM, PsbT, PsbX, PsbY, PsbZ, Psb30/Ycf12, peripheral proteins PsbO, CyanoQ (PsbQ), PsbU, PsbV and a large number of cofactors. It forms dimeric complexes.

The protein localises to the cellular thylakoid membrane. One of the components of the core complex of photosystem II (PSII). PSII is a light-driven water:plastoquinone oxidoreductase that uses light energy to abstract electrons from H(2)O, generating O(2) and a proton gradient subsequently used for ATP formation. It consists of a core antenna complex that captures photons, and an electron transfer chain that converts photonic excitation into a charge separation. The polypeptide is Photosystem II reaction center protein K (Microcystis aeruginosa (strain NIES-843 / IAM M-2473)).